A 255-amino-acid polypeptide reads, in one-letter code: Ribonuclease HII (255 aa).

One can recognise an RNase H type-2 domain in the interval 72–255 (RLIAGVDEVG…KTFAPVQSFR (184 aa)). A divalent metal cation contacts are provided by Asp78, Glu79, and Asp170.

Belongs to the RNase HII family. It depends on Mn(2+) as a cofactor. Mg(2+) is required as a cofactor.

The protein resides in the cytoplasm. It carries out the reaction Endonucleolytic cleavage to 5'-phosphomonoester.. Functionally, endonuclease that specifically degrades the RNA of RNA-DNA hybrids. The chain is Ribonuclease HII (rnhB) from Bacillus subtilis (strain 168).